A 276-amino-acid polypeptide reads, in one-letter code: 4-hydroxy-3-methylbut-2-enyl diphosphate reductase (276 aa).

Cys-12 is a [4Fe-4S] cluster binding site. 2 residues coordinate (2E)-4-hydroxy-3-methylbut-2-enyl diphosphate: His-36 and His-71. Positions 36 and 71 each coordinate dimethylallyl diphosphate. The isopentenyl diphosphate site is built by His-36 and His-71. Cys-93 contacts [4Fe-4S] cluster. His-121 contributes to the (2E)-4-hydroxy-3-methylbut-2-enyl diphosphate binding site. Residue His-121 coordinates dimethylallyl diphosphate. His-121 contributes to the isopentenyl diphosphate binding site. The active-site Proton donor is Glu-123. (2E)-4-hydroxy-3-methylbut-2-enyl diphosphate is bound at residue Thr-160. [4Fe-4S] cluster is bound at residue Cys-188. (2E)-4-hydroxy-3-methylbut-2-enyl diphosphate contacts are provided by Ser-216, Ser-217, Asn-218, and Ser-259. Dimethylallyl diphosphate-binding residues include Ser-216, Ser-217, Asn-218, and Ser-259. Positions 216, 217, 218, and 259 each coordinate isopentenyl diphosphate.

This sequence belongs to the IspH family. The cofactor is [4Fe-4S] cluster.

It catalyses the reaction isopentenyl diphosphate + 2 oxidized [2Fe-2S]-[ferredoxin] + H2O = (2E)-4-hydroxy-3-methylbut-2-enyl diphosphate + 2 reduced [2Fe-2S]-[ferredoxin] + 2 H(+). The catalysed reaction is dimethylallyl diphosphate + 2 oxidized [2Fe-2S]-[ferredoxin] + H2O = (2E)-4-hydroxy-3-methylbut-2-enyl diphosphate + 2 reduced [2Fe-2S]-[ferredoxin] + 2 H(+). The protein operates within isoprenoid biosynthesis; dimethylallyl diphosphate biosynthesis; dimethylallyl diphosphate from (2E)-4-hydroxy-3-methylbutenyl diphosphate: step 1/1. It functions in the pathway isoprenoid biosynthesis; isopentenyl diphosphate biosynthesis via DXP pathway; isopentenyl diphosphate from 1-deoxy-D-xylulose 5-phosphate: step 6/6. In terms of biological role, catalyzes the conversion of 1-hydroxy-2-methyl-2-(E)-butenyl 4-diphosphate (HMBPP) into a mixture of isopentenyl diphosphate (IPP) and dimethylallyl diphosphate (DMAPP). Acts in the terminal step of the DOXP/MEP pathway for isoprenoid precursor biosynthesis. The polypeptide is 4-hydroxy-3-methylbut-2-enyl diphosphate reductase (Nautilia profundicola (strain ATCC BAA-1463 / DSM 18972 / AmH)).